The primary structure comprises 843 residues: Protein P (843 aa).

The terminal protein domain (TP) stretch occupies residues 1–177; the sequence is MPLSYQHFRK…FCGSPYSWEQ (177 aa). The spacer stretch occupies residues 178-346; the sequence is ELQHGRLVFQ…YCLTHIVNLL (169 aa). Disordered regions lie at residues 220–273 and 289–316; these read QSRL…SSTS and LSTSKRQSSSGHAVEFHNIPPSSARSQS. Residues 289 to 299 show a composition bias toward polar residues; that stretch reads LSTSKRQSSSG. The interval 347-690 is polymerase/reverse transcriptase domain (RT); sequence EDWGPCTEHG…YLNLYPVARQ (344 aa). Positions 357-600 constitute a Reverse transcriptase domain; that stretch reads EHNIRIPRTP…YSLNFMGYVI (244 aa). D429, D551, and D552 together coordinate Mg(2+).

Belongs to the hepadnaviridae P protein family.

The catalysed reaction is DNA(n) + a 2'-deoxyribonucleoside 5'-triphosphate = DNA(n+1) + diphosphate. It carries out the reaction Endonucleolytic cleavage to 5'-phosphomonoester.. Its activity is regulated as follows. Activated by host HSP70 and HSP40 in vitro to be able to bind the epsilon loop of the pgRNA. Because deletion of the RNase H region renders the protein partly chaperone-independent, the chaperones may be needed indirectly to relieve occlusion of the RNA-binding site by this domain. Inhibited by several reverse-transcriptase inhibitors: Lamivudine, Adefovir and Entecavir. Its function is as follows. Multifunctional enzyme that converts the viral RNA genome into dsDNA in viral cytoplasmic capsids. This enzyme displays a DNA polymerase activity that can copy either DNA or RNA templates, and a ribonuclease H (RNase H) activity that cleaves the RNA strand of RNA-DNA heteroduplexes in a partially processive 3'- to 5'-endonucleasic mode. Neo-synthesized pregenomic RNA (pgRNA) are encapsidated together with the P protein, and reverse-transcribed inside the nucleocapsid. Initiation of reverse-transcription occurs first by binding the epsilon loop on the pgRNA genome, and is initiated by protein priming, thereby the 5'-end of (-)DNA is covalently linked to P protein. Partial (+)DNA is synthesized from the (-)DNA template and generates the relaxed circular DNA (RC-DNA) genome. After budding and infection, the RC-DNA migrates in the nucleus, and is converted into a plasmid-like covalently closed circular DNA (cccDNA). The activity of P protein does not seem to be necessary for cccDNA generation, and is presumably released from (+)DNA by host nuclear DNA repair machinery. The protein is Protein P of Hepatitis B virus genotype C subtype ad (isolate Japan/S-179/1988) (HBV-C).